We begin with the raw amino-acid sequence, 116 residues long: U16-barytoxin-Tl1c (116 aa).

The first 20 residues, 1 to 20 (MKTIIVFLSLLVLATKFGDA), serve as a signal peptide directing secretion. Positions 21 to 76 (NEGVNQEQMKEVIQNEFREDFLNEMAPMSLLQQLEAIESTLLEKEADRNSRQKRCN) are excised as a propeptide. 3 disulfide bridges follow: cysteine 75–cysteine 90, cysteine 82–cysteine 95, and cysteine 89–cysteine 110.

It belongs to the neurotoxin 14 (magi-1) family. 06 (ICK-Trit) subfamily. In terms of tissue distribution, expressed by the venom gland.

The protein localises to the secreted. Its function is as follows. Ion channel inhibitor. This is U16-barytoxin-Tl1c from Trittame loki (Brush-footed trapdoor spider).